A 300-amino-acid chain; its full sequence is Ribonuclease HIII (300 aa).

Residues 86–300 enclose the RNase H type-2 domain; that stretch reads RSRIGVDESG…FNEVLGSGNQ (215 aa). Asp-92, Glu-93, and Asp-196 together coordinate a divalent metal cation.

Belongs to the RNase HII family. RnhC subfamily. The cofactor is Mn(2+). Mg(2+) serves as cofactor.

Its subcellular location is the cytoplasm. It carries out the reaction Endonucleolytic cleavage to 5'-phosphomonoester.. Functionally, endonuclease that specifically degrades the RNA of RNA-DNA hybrids. This Chlamydia trachomatis serovar L2 (strain ATCC VR-902B / DSM 19102 / 434/Bu) protein is Ribonuclease HIII.